The primary structure comprises 347 residues: Methylthioribose-1-phosphate isomerase (347 aa).

Substrate contacts are provided by residues 47–49, Arg90, and Gln199; that span reads RGA. Asp240 serves as the catalytic Proton donor. Residue 250–251 coordinates substrate; sequence NK.

It belongs to the eIF-2B alpha/beta/delta subunits family. MtnA subfamily.

It catalyses the reaction 5-(methylsulfanyl)-alpha-D-ribose 1-phosphate = 5-(methylsulfanyl)-D-ribulose 1-phosphate. It functions in the pathway amino-acid biosynthesis; L-methionine biosynthesis via salvage pathway; L-methionine from S-methyl-5-thio-alpha-D-ribose 1-phosphate: step 1/6. Functionally, catalyzes the interconversion of methylthioribose-1-phosphate (MTR-1-P) into methylthioribulose-1-phosphate (MTRu-1-P). This chain is Methylthioribose-1-phosphate isomerase, found in Natranaerobius thermophilus (strain ATCC BAA-1301 / DSM 18059 / JW/NM-WN-LF).